A 116-amino-acid chain; its full sequence is U16-barytoxin-Tl1c (116 aa).

The first 20 residues, 1–20, serve as a signal peptide directing secretion; it reads MKTIIVFLSLLVLATKFGDA. Positions 21-74 are excised as a propeptide; the sequence is NEGVNQEQMKEVIQNEFREDFLNEMAAMSLLQQLEAIESTLLEKEADRNSRQKR. Intrachain disulfides connect C75-C90, C82-C95, and C89-C110.

This sequence belongs to the neurotoxin 14 (magi-1) family. 06 (ICK-Trit) subfamily. Expressed by the venom gland.

Its subcellular location is the secreted. Functionally, ion channel inhibitor. This Trittame loki (Brush-footed trapdoor spider) protein is U16-barytoxin-Tl1c.